A 414-amino-acid chain; its full sequence is 2,3-diketo-5-methylthiopentyl-1-phosphate enolase (414 aa).

The active-site Proton acceptor is the lysine 99. Substrate is bound by residues lysine 148, lysine 174–glutamate 177, histidine 265, glycine 338, and glycine 360–glycine 361. Residues lysine 174, aspartate 176, and glutamate 177 each contribute to the Mg(2+) site. At lysine 174 the chain carries N6-carboxylysine.

This sequence belongs to the RuBisCO large chain family. Type IV subfamily. Homodimer. Mg(2+) is required as a cofactor.

It carries out the reaction 5-methylsulfanyl-2,3-dioxopentyl phosphate = 2-hydroxy-5-methylsulfanyl-3-oxopent-1-enyl phosphate. It participates in amino-acid biosynthesis; L-methionine biosynthesis via salvage pathway; L-methionine from S-methyl-5-thio-alpha-D-ribose 1-phosphate: step 3/6. Its function is as follows. Catalyzes the enolization of 2,3-diketo-5-methylthiopentyl-1-phosphate (DK-MTP-1-P) into 2-hydroxy-3-keto-5-methylthiopentenyl-1-phosphate (HK-MTPenyl-1-P). The protein is 2,3-diketo-5-methylthiopentyl-1-phosphate enolase of Bacillus cereus (strain B4264).